The following is an 895-amino-acid chain: AP-1 complex subunit gamma (895 aa).

HEAT repeat units follow at residues 130–166 (TAMA…LRKV), 167–205 (PDLT…MDST), 211–256 (KKMV…ILGQ), 301–339 (NGLK…TDIQ), and 341–376 (VQRH…ESNI). Disordered regions lie at residues 591–687 (KQEE…MNNM), 706–733 (NNNS…NNKS), and 746–770 (QLTP…QTSV). Composition is skewed to low complexity over residues 604-626 (PTQT…QSSQ), 639-658 (QSSA…GGNA), 675-687 (NGNM…MNNM), 706-731 (NNNS…NNNN), and 746-765 (QLTP…LSPT). Residues 775–893 (PQPLTFLVYQ…SDVPDTPLPS (119 aa)) form the GAE domain.

Belongs to the adaptor complexes large subunit family. As to quaternary structure, adaptor protein complex 1 (AP-1) is a heterotetramer composed of two large adaptins (gamma-type subunit and beta-type subunit), a medium adaptin (mu-type subunit) and a small adaptin (sigma-type subunit). Interacts with rhgA.

The protein resides in the golgi apparatus. Its subcellular location is the trans-Golgi network. It localises to the cytoplasmic vesicle. The protein localises to the clathrin-coated vesicle membrane. In terms of biological role, subunit of clathrin-associated adaptor protein complex 1 that plays a role in protein sorting in the trans-Golgi network (TGN) and endosomes. The AP complexes mediate the recruitment of clathrin to membranes and the recognition of sorting signals within the cytosolic tails of transmembrane cargo molecules. Also involved in early steps of phagocytosis and macropinocytosis. The chain is AP-1 complex subunit gamma (ap1g1) from Dictyostelium discoideum (Social amoeba).